A 71-amino-acid chain; its full sequence is Translation initiation factor IF-1 (71 aa).

The S1-like domain occupies 1 to 71 (MSKDDLIQFT…LTKGRVIHRH (71 aa)).

It belongs to the IF-1 family. Component of the 30S ribosomal translation pre-initiation complex which assembles on the 30S ribosome in the order IF-2 and IF-3, IF-1 and N-formylmethionyl-tRNA(fMet); mRNA recruitment can occur at any time during PIC assembly.

The protein resides in the cytoplasm. In terms of biological role, one of the essential components for the initiation of protein synthesis. Stabilizes the binding of IF-2 and IF-3 on the 30S subunit to which N-formylmethionyl-tRNA(fMet) subsequently binds. Helps modulate mRNA selection, yielding the 30S pre-initiation complex (PIC). Upon addition of the 50S ribosomal subunit IF-1, IF-2 and IF-3 are released leaving the mature 70S translation initiation complex. The chain is Translation initiation factor IF-1 from Rickettsia prowazekii (strain Madrid E).